The following is a 424-amino-acid chain: MKIFAQSKPLKATISNIAADKSISHRAVIFSLLSSGTNKIENFLFAEDTEHSLEIARKLGADIEIKEGIVFIDAPKKIVEPDCILECGNSGTSMRLFMGLLASVEGFFVLSGDEYLNERPMKRVGEPLCKVGAKIYGRLDGDKAPLCIQGGKLDFFKFKSKIASAQVKTALILAALNSQGCEYSEPELSRDHSEKMLKKMGADIEISGLNLKVKPLTKPLDPLEIFIPNDPSSAFYYAVAATIIPGSKIILKNMLLNKTRIEAYEVLRKMGANIKFTPKSEIYEQIGDIEISYAPLKAVEVSENISWLIDEAPALAIAFACAKGTSVLRNAKELRVKESDRIKVICEGLKCCGINVTELEDGFKITGGEAEPAIITPYGDHRIAMSFAILGLKCGMIIENSECIATSFPNFGKILKQIGANIED.

Positions 21, 22, and 26 each coordinate 3-phosphoshikimate. Lysine 21 serves as a coordination point for phosphoenolpyruvate. Residues glycine 91 and arginine 119 each coordinate phosphoenolpyruvate. 3-phosphoshikimate contacts are provided by serine 164, glutamine 166, aspartate 310, and lysine 337. Glutamine 166 is a binding site for phosphoenolpyruvate. The active-site Proton acceptor is the aspartate 310. The phosphoenolpyruvate site is built by arginine 341 and arginine 382.

This sequence belongs to the EPSP synthase family. As to quaternary structure, monomer.

It is found in the cytoplasm. It carries out the reaction 3-phosphoshikimate + phosphoenolpyruvate = 5-O-(1-carboxyvinyl)-3-phosphoshikimate + phosphate. It participates in metabolic intermediate biosynthesis; chorismate biosynthesis; chorismate from D-erythrose 4-phosphate and phosphoenolpyruvate: step 6/7. Catalyzes the transfer of the enolpyruvyl moiety of phosphoenolpyruvate (PEP) to the 5-hydroxyl of shikimate-3-phosphate (S3P) to produce enolpyruvyl shikimate-3-phosphate and inorganic phosphate. This is 3-phosphoshikimate 1-carboxyvinyltransferase from Campylobacter hominis (strain ATCC BAA-381 / DSM 21671 / CCUG 45161 / LMG 19568 / NCTC 13146 / CH001A).